The chain runs to 641 residues: MNIINLGILAHIDAGKTSVTENLLFASGATEKCGCVDNGDTITDSMDIEKRRGITVRASTTSIIWNGVKCNIIDTPGHMDFIAEVERTFKMLDGAVLILSAKEGIQAQTKLLFNTLQKLQIPTIIFINKIDRAGVNLERLYLDIKANLSQDVLFMQNVVDGSVYPVCSQTYIKEEYKEFVCNHDDNILERYLADSEISPADYWNTIIALVAKAKVYPVLHGSAMFNIGINELLDAITSFILPPASVSNRLSSYLYKIEHDPKGHKRSFLKIIDGSLRLRDVVRINDSEKFIKIKNLKTINQGREINVDEVGANDIAIVEDMDDFRIGNYLGAEPCLIQGLSHQHPALKSSVRPDRPEERSKVISALNTLWIEDPSLSFSINSYSDELEISLYGLTQKEIIQTLLEERFSVKVHFDEIKTIYKERPVKKVNKIIQIEVPPNPYWATIGLTLEPLPLGTGLQIESDISYGYLNHSFQNAVFEGIRMSCQSGLHGWEVTDLKVTFTQAEYYSPVSTPADFRQLTPYVFRLALQQSGVDILEPMLYFELQIPQAASSKAITDLQKMMSEIEDISCNNEWCHIKGKVPLNTSKDYASEVSSYTKGLGIFMVKPCGYQITKGGYSDNIRMNEKDKLLFMFQKSMSSK.

One can recognise a tr-type G domain in the interval 1–244 (MNIINLGILA…AITSFILPPA (244 aa)). GTP-binding positions include 10–17 (AHIDAGKT), 74–78 (DTPGH), and 128–131 (NKID).

It belongs to the TRAFAC class translation factor GTPase superfamily. Classic translation factor GTPase family. TetM/TetO subfamily.

Its function is as follows. Abolishes the inhibitory effect of tetracyclin on protein synthesis by a non-covalent modification of the ribosomes. The protein is Tetracycline resistance protein TetQ (tetQ) of Bacteroides thetaiotaomicron.